Reading from the N-terminus, the 61-residue chain is Small ribosomal subunit protein bS21 (61 aa).

This sequence belongs to the bacterial ribosomal protein bS21 family.

The polypeptide is Small ribosomal subunit protein bS21 (Leuconostoc mesenteroides subsp. mesenteroides (strain ATCC 8293 / DSM 20343 / BCRC 11652 / CCM 1803 / JCM 6124 / NCDO 523 / NBRC 100496 / NCIMB 8023 / NCTC 12954 / NRRL B-1118 / 37Y)).